Here is a 438-residue protein sequence, read N- to C-terminus: GTPase Obg (438 aa).

An Obg domain is found at S2–L160. The tract at residues N128 to P147 is disordered. Residues A161 to A338 form the OBG-type G domain. GTP contacts are provided by residues G167 to S174, F192 to V196, D214 to G217, N284 to D287, and S319 to L321. Residues S174 and T194 each contribute to the Mg(2+) site. The OCT domain maps to G360 to D438.

This sequence belongs to the TRAFAC class OBG-HflX-like GTPase superfamily. OBG GTPase family. In terms of assembly, monomer. The cofactor is Mg(2+).

The protein localises to the cytoplasm. An essential GTPase which binds GTP, GDP and possibly (p)ppGpp with moderate affinity, with high nucleotide exchange rates and a fairly low GTP hydrolysis rate. Plays a role in control of the cell cycle, stress response, ribosome biogenesis and in those bacteria that undergo differentiation, in morphogenesis control. The protein is GTPase Obg of Streptococcus uberis (strain ATCC BAA-854 / 0140J).